A 276-amino-acid chain; its full sequence is Large ribosomal subunit protein uL2cy (276 aa).

Disordered stretches follow at residues 1–25 (MAIHLYKTSTPSTRNGTVDSQVKSN) and 225–276 (MNPV…RRSK). Polar residues predominate over residues 7-25 (KTSTPSTRNGTVDSQVKSN).

It belongs to the universal ribosomal protein uL2 family. As to quaternary structure, part of the 50S ribosomal subunit.

The protein resides in the plastid. Its subcellular location is the chloroplast. The chain is Large ribosomal subunit protein uL2cy (rpl2-B) from Coffea arabica (Arabian coffee).